The primary structure comprises 435 residues: KMCGVTQNWESYESTKKASQLNLTPEQQRFPQRYIKLGIFVDHGMYTKYSGNSERITKRVHQMINNINMMCRALNIVTTLSLLEIWSEKDLITVQASAPTTLTLFGAWRETVLLNRTSHDHAQLLTATIFNGNVIGRAPVGGMCDPKRSVAIVRDHNAIVFVVAVTMTHEMGHNLGNHHDEDKCNCNTCIMSKVLSRQPSKYFSECSKDYYQTFLTNHNFQCILNAPLRTDTVSTPVSGNELLEAGEDCDCGSPANPCCDAATCKLRPGAQCGEGLCCDQCRFTSAGTECRAARSECDIAESCAGQSADCPTDDFHRNGQPCLNNHGYCYNGNCPIMFYQCIALFGSNATVGQDGCFDANDIGHKYFHCRKDNEKYIPCAPQDVKCGRLFCTYIYDIDLCRYDDSANGMVAQGTKCADGKVCNSNRQCADVNTAY.

The propeptide occupies 1–26; sequence KMCGVTQNWESYESTKKASQLNLTPE. Gln27 is subject to Pyrrolidone carboxylic acid. A Peptidase M12B domain is found at 33–227; it reads RYIKLGIFVD…HNFQCILNAP (195 aa). Asn115 is a glycosylation site (N-linked (GlcNAc...) asparagine). Disulfide bonds link Cys144-Cys222, Cys184-Cys206, and Cys186-Cys189. His169 contributes to the Zn(2+) binding site. The active site involves Glu170. 2 residues coordinate Zn(2+): His173 and His179. The propeptide occupies 228–243; it reads LRTDTVSTPVSGNELL. A Disintegrin domain is found at 235–318; that stretch reads TPVSGNELLE…DCPTDDFHRN (84 aa). Residues Val237, Asn240, Leu242, Glu244, Glu247, and Asp250 each coordinate Ca(2+). 6 disulfides stabilise this stretch: Cys249–Cys264, Cys251–Cys259, Cys258–Cys281, Cys272–Cys278, Cys277–Cys303, and Cys290–Cys310. Residues 296 to 298 carry the D/ECD-tripeptide motif; it reads ECD.

The protein belongs to the venom metalloproteinase (M12B) family. P-III subfamily. P-IIIb sub-subfamily. As to quaternary structure, monomer. The cofactor is Zn(2+). Post-translationally, the N-terminus of the metalloproteinase is blocked. Expressed by the venom gland.

It is found in the secreted. Its activity is regulated as follows. Inhibited by EDTA. Its function is as follows. Cleaves the alpha chain of fibrinogen (FGA) preferentially and cleaves the beta chain (FGB) either on longer incubation or at high concentrations. Induces apoptosis of endothelial cells (prior to cell detachment). Functionally, disintegrin: inhibits platelet aggregation induced by ADP, thrombin, platelet-activating factor and collagen. Acts by inhibiting fibrinogen interaction with platelet receptors GPIIb/GPIIIa (ITGA2B/ITGB3). The chain is Zinc metalloproteinase/disintegrin from Craspedocephalus gramineus (Bamboo pit viper).